A 292-amino-acid polypeptide reads, in one-letter code: Protein/nucleic acid deglycase HchA (292 aa).

Positions 1–12 (MSQDVNELSKQP) are enriched in polar residues. The interval 1-23 (MSQDVNELSKQPTPDKAEDNAFF) is disordered. Catalysis depends on cysteine 190, which acts as the Nucleophile.

This sequence belongs to the peptidase C56 family. HchA subfamily.

The protein resides in the cytoplasm. The catalysed reaction is N(omega)-(1-hydroxy-2-oxopropyl)-L-arginyl-[protein] + H2O = lactate + L-arginyl-[protein] + H(+). It carries out the reaction N(6)-(1-hydroxy-2-oxopropyl)-L-lysyl-[protein] + H2O = lactate + L-lysyl-[protein] + H(+). The enzyme catalyses S-(1-hydroxy-2-oxopropyl)-L-cysteinyl-[protein] + H2O = lactate + L-cysteinyl-[protein] + H(+). It catalyses the reaction N(omega)-(1-hydroxy-2-oxoethyl)-L-arginyl-[protein] + H2O = L-arginyl-[protein] + glycolate + H(+). The catalysed reaction is N(6)-(1-hydroxy-2-oxoethyl)-L-lysyl-[protein] + H2O = glycolate + L-lysyl-[protein] + H(+). It carries out the reaction S-(1-hydroxy-2-oxoethyl)-L-cysteinyl-[protein] + H2O = glycolate + L-cysteinyl-[protein] + H(+). The enzyme catalyses N(2)-(1-hydroxy-2-oxopropyl)-dGTP + H2O = lactate + dGTP + H(+). It catalyses the reaction N(2)-(1-hydroxy-2-oxopropyl)-GTP + H2O = lactate + GTP + H(+). The catalysed reaction is N(2)-(1-hydroxy-2-oxopropyl)-GDP + H2O = lactate + GDP + H(+). It carries out the reaction N(2)-(1-hydroxy-2-oxopropyl)-GMP + H2O = lactate + GMP + H(+). The enzyme catalyses N(2)-(1-hydroxy-2-oxoethyl)-dGTP + H2O = dGTP + glycolate + H(+). It catalyses the reaction N(2)-(1-hydroxy-2-oxoethyl)-GTP + H2O = glycolate + GTP + H(+). The catalysed reaction is N(2)-(1-hydroxy-2-oxoethyl)-GDP + H2O = glycolate + GDP + H(+). It carries out the reaction N(2)-(1-hydroxy-2-oxoethyl)-GMP + H2O = glycolate + GMP + H(+). The enzyme catalyses an N(2)-(1-hydroxy-2-oxopropyl)-guanosine in RNA + H2O = a guanosine in RNA + lactate + H(+). It catalyses the reaction an N(2)-(1-hydroxy-2-oxopropyl)-2'-deoxyguanosine in DNA + H2O = a 2'-deoxyguanosine in DNA + lactate + H(+). The catalysed reaction is an N(2)-(1-hydroxy-2-oxoethyl)-guanosine in RNA + H2O = a guanosine in RNA + glycolate + H(+). It carries out the reaction an N(2)-(1-hydroxy-2-oxoethyl)-2'-deoxyguanosine in DNA + H2O = a 2'-deoxyguanosine in DNA + glycolate + H(+). Protein and nucleotide deglycase that catalyzes the deglycation of the Maillard adducts formed between amino groups of proteins or nucleotides and reactive carbonyl groups of glyoxals. Thus, functions as a protein deglycase that repairs methylglyoxal- and glyoxal-glycated proteins, and releases repaired proteins and lactate or glycolate, respectively. Deglycates cysteine, arginine and lysine residues in proteins, and thus reactivates these proteins by reversing glycation by glyoxals. Acts on early glycation intermediates (hemithioacetals and aminocarbinols), preventing the formation of Schiff bases and advanced glycation endproducts (AGE). Also functions as a nucleotide deglycase able to repair glycated guanine in the free nucleotide pool (GTP, GDP, GMP, dGTP) and in DNA and RNA. Is thus involved in a major nucleotide repair system named guanine glycation repair (GG repair), dedicated to reversing methylglyoxal and glyoxal damage via nucleotide sanitization and direct nucleic acid repair. Plays an important role in protecting cells from carbonyl stress. The polypeptide is Protein/nucleic acid deglycase HchA (Staphylococcus aureus (strain MSSA476)).